The sequence spans 391 residues: DNA polymerase IV (391 aa).

The 182-residue stretch at 6–187 (IIHVDMDAFF…LPVEMLWGVG (182 aa)) folds into the UmuC domain. Mg(2+)-binding residues include aspartate 10 and aspartate 105. Residue glutamate 106 is part of the active site.

It belongs to the DNA polymerase type-Y family. Monomer. The cofactor is Mg(2+).

Its subcellular location is the cytoplasm. The enzyme catalyses DNA(n) + a 2'-deoxyribonucleoside 5'-triphosphate = DNA(n+1) + diphosphate. In terms of biological role, poorly processive, error-prone DNA polymerase involved in untargeted mutagenesis. Copies undamaged DNA at stalled replication forks, which arise in vivo from mismatched or misaligned primer ends. These misaligned primers can be extended by PolIV. Exhibits no 3'-5' exonuclease (proofreading) activity. May be involved in translesional synthesis, in conjunction with the beta clamp from PolIII. The sequence is that of DNA polymerase IV from Carboxydothermus hydrogenoformans (strain ATCC BAA-161 / DSM 6008 / Z-2901).